We begin with the raw amino-acid sequence, 88 residues long: Putative septation protein SpoVG (88 aa).

Belongs to the SpoVG family.

Functionally, could be involved in septation. The sequence is that of Putative septation protein SpoVG from Desulforudis audaxviator (strain MP104C).